Here is a 77-residue protein sequence, read N- to C-terminus: Conotoxin Vc1 (77 aa).

A signal peptide spans 1-22 (MRTSGRLLLLCLAVGLLLESQA). 2 consecutive propeptides follow at residues 23 to 58 (HPNA…KGQR) and 73 to 77 (RRSFY).

This sequence belongs to the conotoxin H superfamily. In terms of tissue distribution, expressed by the venom duct.

The protein resides in the secreted. Functionally, probable toxin. The sequence is that of Conotoxin Vc1 from Conus victoriae (Queen Victoria cone).